A 953-amino-acid chain; its full sequence is Nonsense-mediated mRNA decay factor SMG8 (953 aa).

Disordered regions lie at residues Ala571–Pro604 and Pro629–Asn653. Acidic residues predominate over residues Ala574 to Pro586. Polar residues predominate over residues Ile595 to Pro604. Positions Ser634 to Asn653 are enriched in low complexity.

Belongs to the SMG8 family.

Involved in nonsense-mediated decay (NMD) of mRNAs containing premature stop codons. Probable component of kinase complex containing nonC and recruited to stalled ribosomes. This Drosophila persimilis (Fruit fly) protein is Nonsense-mediated mRNA decay factor SMG8.